Consider the following 197-residue polypeptide: MAKVLVLKSSILGDYSQSAKLIDHLQQHWQGQGAEVTVRDLAAQPLPVLDGEIAMGLRGGDELSPRQQEVLALSDELVAELKAHDTLVIAAPMYNFSIPTQLKNWIDLVARAGVTFTYTETGPKGLVEGKRAVLVTTRGGVHKNGASDHVVPYLKTVLGFIGIDEVETVYGEALNMGPEANEQGISQAKQSIEQLVA.

FMN contacts are provided by residues serine 10, 16 to 18 (SQS), 93 to 96 (MYNF), and 137 to 140 (TRGG).

This sequence belongs to the azoreductase type 1 family. In terms of assembly, homodimer. The cofactor is FMN.

The catalysed reaction is 2 a quinone + NADH + H(+) = 2 a 1,4-benzosemiquinone + NAD(+). It catalyses the reaction N,N-dimethyl-1,4-phenylenediamine + anthranilate + 2 NAD(+) = 2-(4-dimethylaminophenyl)diazenylbenzoate + 2 NADH + 2 H(+). Quinone reductase that provides resistance to thiol-specific stress caused by electrophilic quinones. Functionally, also exhibits azoreductase activity. Catalyzes the reductive cleavage of the azo bond in aromatic azo compounds to the corresponding amines. In Shewanella loihica (strain ATCC BAA-1088 / PV-4), this protein is FMN-dependent NADH:quinone oxidoreductase.